The sequence spans 716 residues: MARLSTGKAACQVVLGLLITSLTESSILTSECPQLCVCEIRPWFTPQSTYREATTVDCNDLRLTRIPGNLSSDTQVLLLQSNNIAKTVDELQQLFNLTELDFSQNNFTNIKEVGLANLTQLTTLHLEENQISEMTDYCLQDLSNLQELYINHNQISTISANAFSGLKNLLRLHLNSNKLKVIDSRWFDSTPNLEILMIGENPVIGILDMNFRPLSNLRSLVLAGMYLTDVPGNALVGLDSLESLSFYDNKLIKVPQLALQKVPNLKFLDLNKNPIHKIQEGDFKNMLRLKELGINNMGELVSVDRYALDNLPELTKLEATNNPKLSYIHRLAFRSVPALESLMLNNNALNAVYQKTVESLPNLREISIHSNPLRCDCVIHWINSNKTNIRFMEPLSMFCAMPPEYRGQQVKEVLIQDSSEQCLPMISHDTFPNHLNMDIGTTLFLDCRAMAEPEPEIYWVTPIGNKITVETLSDKYKLSSEGTLEIANIQIEDSGRYTCVAQNVQGADTRVATIKVNGTLLDGAQVLKIYVKQTESHSILVSWKVNSNVMTSNLKWSSATMKIDNPHITYTARVPVDVHEYNLTHLQPSTDYEVCLTVSNIHQQTQKSCVNVTTKTAAFALDISDHETSTALAAVMGSMFAVISLASIAIYIAKRFKRKNYHHSLKKYMQKTSSIPLNELYPPLINLWEADSDKDKDGSADTKPTQVDTSRSYYMW.

The signal sequence occupies residues 1–25 (MARLSTGKAACQVVLGLLITSLTES). The LRRNT domain maps to 26–72 (SILTSECPQLCVCEIRPWFTPQSTYREATTVDCNDLRLTRIPGNLSS). The Extracellular segment spans residues 26–631 (SILTSECPQL…DISDHETSTA (606 aa)). A glycan (N-linked (GlcNAc...) asparagine) is linked at Asn69. LRR repeat units lie at residues 73–95 (DTQV…QQLF), 96–117 (NLTE…GLAN), 120–141 (QLTT…CLQD), 144–165 (NLQE…AFSG), 168–189 (NLLR…WFDS), 192–213 (NLEI…NFRP), 216–237 (NLRS…ALVG), 240–261 (SLES…ALQK), and 264–285 (NLKF…DFKN). N-linked (GlcNAc...) asparagine glycosylation is found at Asn96 and Asn117. Positions 371–424 (NPLRCDCVIHWINSNKTNIRFMEPLSMFCAMPPEYRGQQVKEVLIQDSSEQCLP) constitute an LRRCT domain. The N-linked (GlcNAc...) asparagine glycan is linked to Asn385. Residues 424–515 (PMISHDTFPN…GADTRVATIK (92 aa)) enclose the Ig-like C2-type domain. The cysteines at positions 447 and 499 are disulfide-linked. A glycan (N-linked (GlcNAc...) asparagine) is linked at Asn517. In terms of domain architecture, Fibronectin type-III spans 525 to 619 (QVLKIYVKQT…VNVTTKTAAF (95 aa)). The helical transmembrane segment at 632-652 (LAAVMGSMFAVISLASIAIYI) threads the bilayer. The Cytoplasmic portion of the chain corresponds to 653–716 (AKRFKRKNYH…VDTSRSYYMW (64 aa)). A disordered region spans residues 692–716 (SDKDKDGSADTKPTQVDTSRSYYMW). Polar residues predominate over residues 702-716 (TKPTQVDTSRSYYMW).

As to expression, expressed in brain.

The protein resides in the membrane. This is Leucine-rich repeat neuronal protein 1 (Lrrn1) from Mus musculus (Mouse).